The chain runs to 176 residues: Large ribosomal subunit protein uL22z (176 aa).

Residues 154 to 163 (KEEPVKKEPE) show a composition bias toward basic and acidic residues. Residues 154–176 (KEEPVKKEPETQLAAKSKKGASS) form a disordered region.

The protein belongs to the universal ribosomal protein uL22 family.

This chain is Large ribosomal subunit protein uL22z (RPL17A), found in Arabidopsis thaliana (Mouse-ear cress).